A 310-amino-acid polypeptide reads, in one-letter code: Antiviral protein II/III (310 aa).

The signal sequence occupies residues 1 to 25 (MKMKVLEVVGLAISIWLMLTPPASS). Intrachain disulfides connect cysteine 57/cysteine 284 and cysteine 106/cysteine 123. Tyrosine 94 is a catalytic residue. Active-site residues include tyrosine 142, glutamate 197, and arginine 200.

This sequence belongs to the ribosome-inactivating protein family. Type 1 RIP subfamily. PAP-II is expressed in early summer leaves (at protein level). PAP-III is expressed in late summer leaves (at protein level).

The catalysed reaction is Endohydrolysis of the N-glycosidic bond at one specific adenosine on the 28S rRNA.. In terms of biological role, possesses antiviral potency. Inhibits viral infection of plants (tobacco mosaic virus). Inhibits protein synthesis in both prokaryotes and eukaryotes. The protein is Antiviral protein II/III (PAP2) of Phytolacca americana (American pokeweed).